Reading from the N-terminus, the 482-residue chain is UDP-N-acetylmuramoyl-L-alanyl-D-glutamate--2,6-diaminopimelate ligase (482 aa).

Ser29 serves as a coordination point for UDP-N-acetyl-alpha-D-muramoyl-L-alanyl-D-glutamate. 109–115 (GTNGKTS) is an ATP binding site. UDP-N-acetyl-alpha-D-muramoyl-L-alanyl-D-glutamate is bound by residues 151–152 (TT), Ser178, and Arg186. Lys218 carries the post-translational modification N6-carboxylysine. Meso-2,6-diaminopimelate is bound by residues Arg375, 399–402 (DNPR), Gly451, and Glu455. The Meso-diaminopimelate recognition motif motif lies at 399–402 (DNPR).

It belongs to the MurCDEF family. MurE subfamily. The cofactor is Mg(2+). Carboxylation is probably crucial for Mg(2+) binding and, consequently, for the gamma-phosphate positioning of ATP.

It is found in the cytoplasm. The enzyme catalyses UDP-N-acetyl-alpha-D-muramoyl-L-alanyl-D-glutamate + meso-2,6-diaminopimelate + ATP = UDP-N-acetyl-alpha-D-muramoyl-L-alanyl-gamma-D-glutamyl-meso-2,6-diaminopimelate + ADP + phosphate + H(+). It functions in the pathway cell wall biogenesis; peptidoglycan biosynthesis. Functionally, catalyzes the addition of meso-diaminopimelic acid to the nucleotide precursor UDP-N-acetylmuramoyl-L-alanyl-D-glutamate (UMAG) in the biosynthesis of bacterial cell-wall peptidoglycan. In Caldanaerobacter subterraneus subsp. tengcongensis (strain DSM 15242 / JCM 11007 / NBRC 100824 / MB4) (Thermoanaerobacter tengcongensis), this protein is UDP-N-acetylmuramoyl-L-alanyl-D-glutamate--2,6-diaminopimelate ligase.